A 317-amino-acid polypeptide reads, in one-letter code: MQNKLKLIAIVPKISLLKNRLDQVLASLFKKHSRTILKRHILSKDVCVNGRILDQPDAKVLYKDIISINLKFKAKNDYQAENIFLNVIYEDDDILVINKQDNFVVHPGAGNTSGTLLNALLHRDSTFFNIPRAGIVHRLDKDTTGLMVIAKNNLSYMALIDQIKCKKVIREYQAIVYGKVISGGTIVKSIIRNPIKRTTMIVNKCGKRAITHYRILKRFTHHTHLKIILETGRTHQIRTHMLYINFPLVGDKTYGNKFKFYKNISLTLLEQVKKFPRQALHASRLCLYHPVTKHLMEWNSTLPRDMLNLIALLNKNI.

In terms of domain architecture, S4 RNA-binding spans 19 to 83 (NRLDQVLASL…AKNDYQAENI (65 aa)). Asp140 is an active-site residue.

It belongs to the pseudouridine synthase RluA family.

The protein resides in the cytoplasm. It catalyses the reaction uridine(1911/1915/1917) in 23S rRNA = pseudouridine(1911/1915/1917) in 23S rRNA. Responsible for synthesis of pseudouridine from uracil at positions 1911, 1915 and 1917 in 23S ribosomal RNA. The protein is Ribosomal large subunit pseudouridine synthase D (rluD) of Buchnera aphidicola subsp. Baizongia pistaciae (strain Bp).